We begin with the raw amino-acid sequence, 501 residues long: 4,4'-diapophytoene desaturase (4,4'-diaponeurosporene-forming) (501 aa).

5–17 is a binding site for FAD; it reads VVGAGVTGLAAAA.

It belongs to the carotenoid/retinoid oxidoreductase family. CrtN subfamily.

It catalyses the reaction 15-cis-4,4'-diapophytoene + 3 FAD + 3 H(+) = all-trans-4,4'-diaponeurosporene + 3 FADH2. It functions in the pathway carotenoid biosynthesis; staphyloxanthin biosynthesis; staphyloxanthin from farnesyl diphosphate: step 2/5. In terms of biological role, involved in the biosynthesis of the yellow-orange carotenoid staphyloxanthin, which plays a role in the virulence via its protective function against oxidative stress. Catalyzes three successive dehydrogenation reactions that lead to the introduction of three double bonds into 4,4'-diapophytoene (dehydrosqualene), with 4,4'-diapophytofluene and 4,4'-diapo-zeta-carotene as intermediates, and 4,4'-diaponeurosporene (the major deep-yellow pigment in staphylococci strains) as the end product. The polypeptide is 4,4'-diapophytoene desaturase (4,4'-diaponeurosporene-forming) (Staphylococcus haemolyticus (strain JCSC1435)).